Reading from the N-terminus, the 211-residue chain is LexA repressor (211 aa).

Positions 29-49 (VREICTAVGLRSTSTVHSHLN) form a DNA-binding region, H-T-H motif. Catalysis depends on for autocatalytic cleavage activity residues Ser-131 and Lys-169.

It belongs to the peptidase S24 family. As to quaternary structure, homodimer.

The enzyme catalyses Hydrolysis of Ala-|-Gly bond in repressor LexA.. Functionally, represses a number of genes involved in the response to DNA damage (SOS response), including recA and lexA. In the presence of single-stranded DNA, RecA interacts with LexA causing an autocatalytic cleavage which disrupts the DNA-binding part of LexA, leading to derepression of the SOS regulon and eventually DNA repair. This is LexA repressor from Clostridioides difficile (strain 630) (Peptoclostridium difficile).